Here is a 520-residue protein sequence, read N- to C-terminus: MSRFQSLLAFVVASLAAVAHAAIGPTADLTISNAEVSPDGFARQAVVVNNVTPGPLVAGNKGDRFQLNVIDNLTNHTMLKSTSIHWHGFFQKGTNWADGPAFVNQCPISSGHSFLYDFQVPDQAGTFWYHSHLSTQYCDGLRGPFVVYDPNDPHASLYDVDNDDTVITLADWYHTAAKLGPAFPLGADATLINGLGRSPSTTAADLAVINVTKGKRYRFRLVSLSCDPNHTFSIDGHDLTIIEVDSINSQPLVVDSIQIFAAQRYSFVLNADQDVGNYWIRANPNFGNVGFAGGINSAILRYDGADPVEPTTTQTTPTKPLNEVDLHPLATMAVPGSPVAGGVDTAINMAFNFNGTNFFINGASFVPPTVPVLLQIISGAQNAQDLLPSGSVYSLPSNADIEISFPATAAAPGAPHPFHLHGHAFAVVRSAGSTVYNYDNPIFRDVVSTGTPAAGDNVTIRFRTDNPGPWFLHCHIDFHLEAGFAVVFAEDIPDVASANPVPQAWSDLCPIYDALDVNDQ.

Positions 1–21 (MSRFQSLLAFVVASLAAVAHA) are cleaved as a signal peptide. Plastocyanin-like domains follow at residues 23–148 (IGPT…FVVY) and 160–302 (VDND…ILRY). 2 N-linked (GlcNAc...) asparagine glycosylation sites follow: asparagine 72 and asparagine 75. Cu cation contacts are provided by histidine 85, histidine 87, histidine 130, and histidine 132. Disulfide bonds link cysteine 106–cysteine 509 and cysteine 138–cysteine 226. N-linked (GlcNAc...) asparagine glycans are attached at residues asparagine 210, asparagine 229, and asparagine 354. The region spanning 369–491 (TVPVLLQIIS…AGFAVVFAED (123 aa)) is the Plastocyanin-like 3 domain. Positions 416, 419, 421, 473, 474, 475, and 479 each coordinate Cu cation.

This sequence belongs to the multicopper oxidase family. It depends on Cu cation as a cofactor.

The protein resides in the secreted. The catalysed reaction is 4 hydroquinone + O2 = 4 benzosemiquinone + 2 H2O. Functionally, lignin degradation and detoxification of lignin-derived products. Has activity towards guaiacol. This chain is Laccase, found in Trametes hirsuta (White-rot fungus).